The sequence spans 363 residues: Cinnamyl alcohol dehydrogenase 2 (363 aa).

Residue Cys47 participates in Zn(2+) binding. Thr49 lines the NADP(+) pocket. Zn(2+) is bound by residues His69, Glu70, Cys100, Cys103, Cys106, Cys114, and Cys163. Residues Thr167, 188–193 (GLGGVG), 211–216 (SSSARK), Thr251, Gly275, and 298–300 (SFI) each bind NADP(+).

It belongs to the zinc-containing alcohol dehydrogenase family. As to quaternary structure, homodimer. Requires Zn(2+) as cofactor. Expressed in roots behind the root tips in the pericycle region and layer of cortical cells adjacent to the exodermis. Expressed in vascular bundles and lateral veins of leaf sheaths and blades. Expressed in the vicinity of vascular bundles in the first internode below the inflorescence. Highly expressed in the culm.

It carries out the reaction (E)-cinnamyl alcohol + NADP(+) = (E)-cinnamaldehyde + NADPH + H(+). The enzyme catalyses (E)-coniferol + NADP(+) = (E)-coniferaldehyde + NADPH + H(+). It catalyses the reaction (E)-sinapyl alcohol + NADP(+) = (E)-sinapaldehyde + NADPH + H(+). The catalysed reaction is (E)-4-coumaroyl alcohol + NADP(+) = (E)-4-coumaraldehyde + NADPH + H(+). It carries out the reaction (E)-caffeyl alcohol + NADP(+) = (E)-caffeyl aldehyde + NADPH + H(+). It functions in the pathway aromatic compound metabolism; phenylpropanoid biosynthesis. Functionally, involved in lignin biosynthesis. Catalyzes the final step specific for the production of lignin monomers. Catalyzes the NADPH-dependent reduction of coniferaldehyde and sinapaldehyde to their respective alcohols. Plays the major role in monolignol biosynthesis. Functions cooperatively with COMT in the culm internodes for the biosynthesis of monolignols, the lignin precursors. May be involved in lignin biosynthesis in leaves and roots. The sequence is that of Cinnamyl alcohol dehydrogenase 2 from Oryza sativa subsp. japonica (Rice).